Here is a 348-residue protein sequence, read N- to C-terminus: Bombesin receptor-activated protein C6orf89 homolog (348 aa).

Residues Met1–Leu58 lie on the Cytoplasmic side of the membrane. Residues Ile59 to Ile79 form a helical membrane-spanning segment. Over Gln80–Leu348 the chain is Extracellular.

As to quaternary structure, homodimer. Interacts with BRS3. Interacts (via N-terminus) with SIN3B. In terms of processing, glycosylated.

Its subcellular location is the golgi apparatus membrane. It is found in the cytoplasm. In terms of biological role, exhibits histone deacetylase (HDAC) enhancer properties. May play a role in cell cycle progression and wound repair of bronchial epithelial cells. This Mus musculus (Mouse) protein is Bombesin receptor-activated protein C6orf89 homolog.